Here is a 98-residue protein sequence, read N- to C-terminus: NADH-ubiquinone oxidoreductase chain 4L (98 aa).

Transmembrane regions (helical) follow at residues 1–21 (MSLV…GLLM), 30–50 (LLCL…TILT), and 61–81 (IVLL…LVMV).

Belongs to the complex I subunit 4L family. Core subunit of respiratory chain NADH dehydrogenase (Complex I) which is composed of 45 different subunits.

Its subcellular location is the mitochondrion inner membrane. It carries out the reaction a ubiquinone + NADH + 5 H(+)(in) = a ubiquinol + NAD(+) + 4 H(+)(out). Functionally, core subunit of the mitochondrial membrane respiratory chain NADH dehydrogenase (Complex I) which catalyzes electron transfer from NADH through the respiratory chain, using ubiquinone as an electron acceptor. Part of the enzyme membrane arm which is embedded in the lipid bilayer and involved in proton translocation. In Crocidura russula (Greater white-toothed shrew), this protein is NADH-ubiquinone oxidoreductase chain 4L (MT-ND4L).